The following is a 372-amino-acid chain: 4-hydroxy-3-methylbut-2-en-1-yl diphosphate synthase (flavodoxin) (372 aa).

Positions 270, 273, 305, and 312 each coordinate [4Fe-4S] cluster.

It belongs to the IspG family. The cofactor is [4Fe-4S] cluster.

The catalysed reaction is (2E)-4-hydroxy-3-methylbut-2-enyl diphosphate + oxidized [flavodoxin] + H2O + 2 H(+) = 2-C-methyl-D-erythritol 2,4-cyclic diphosphate + reduced [flavodoxin]. It participates in isoprenoid biosynthesis; isopentenyl diphosphate biosynthesis via DXP pathway; isopentenyl diphosphate from 1-deoxy-D-xylulose 5-phosphate: step 5/6. Converts 2C-methyl-D-erythritol 2,4-cyclodiphosphate (ME-2,4cPP) into 1-hydroxy-2-methyl-2-(E)-butenyl 4-diphosphate. The polypeptide is 4-hydroxy-3-methylbut-2-en-1-yl diphosphate synthase (flavodoxin) (Vibrio vulnificus (strain CMCP6)).